The primary structure comprises 400 residues: NADPH dehydrogenase 2 (400 aa).

Residues Thr38 and Gln115 each contribute to the FMN site. Substrate contacts are provided by His192 and Asn195. The Proton donor role is filled by Tyr197. FMN-binding residues include Arg244 and Arg349. Ser353 bears the Phosphoserine mark. Substrate is bound at residue Tyr376. Position 379 is a phosphoserine (Ser379).

This sequence belongs to the NADH:flavin oxidoreductase/NADH oxidase family. In terms of assembly, homodimer or heterodimer with OYE3. The cofactor is FMN.

Its subcellular location is the cytoplasm. It localises to the nucleus. The protein localises to the mitochondrion. It carries out the reaction A + NADPH + H(+) = AH2 + NADP(+). Its function is as follows. Flavin-dependent enoate reductase that catalyzes the chemo- and stereoslective hydrogenation of electron-poor alkenes. The enzyme is reduced by NADPH, and oxygen, quinones, and alpha,beta-unsaturated aldehydes and ketones can act as electron acceptors to complete catalytic turnover. The physiological oxidant remains elusive. Has an antioxidant activity, reducing reactive oxygen species (ROS) levels when overexpressed. Formation of OYE2-OYE3 heterodimers contribute to the induction of programmed cell death upon oxidative stress. The protein is NADPH dehydrogenase 2 of Saccharomyces cerevisiae (strain ATCC 204508 / S288c) (Baker's yeast).